Here is a 245-residue protein sequence, read N- to C-terminus: Ribonuclease 3 (245 aa).

The RNase III domain occupies 19-148; that stretch reads FKLFQEKIGI…FIGALYLDQG (130 aa). Glutamate 61 is a Mg(2+) binding site. Aspartate 65 is an active-site residue. Mg(2+)-binding residues include aspartate 134 and glutamate 137. Residue glutamate 137 is part of the active site. The 70-residue stretch at 174–243 folds into the DRBM domain; it reads DYKSQLQELI…AAEALKKLKE (70 aa).

Belongs to the ribonuclease III family. As to quaternary structure, homodimer. Mg(2+) serves as cofactor.

Its subcellular location is the cytoplasm. It catalyses the reaction Endonucleolytic cleavage to 5'-phosphomonoester.. Its function is as follows. Digests double-stranded RNA. Involved in the processing of primary rRNA transcript to yield the immediate precursors to the large and small rRNAs (23S and 16S). Processes some mRNAs, and tRNAs when they are encoded in the rRNA operon. Processes pre-crRNA and tracrRNA of type II CRISPR loci if present in the organism. The protein is Ribonuclease 3 of Bacillus cereus (strain 03BB102).